The primary structure comprises 464 residues: ATP synthase subunit beta 2 (464 aa).

Residue 153–160 (GGAGVGKT) participates in ATP binding.

This sequence belongs to the ATPase alpha/beta chains family. F-type ATPases have 2 components, CF(1) - the catalytic core - and CF(0) - the membrane proton channel. CF(1) has five subunits: alpha(3), beta(3), gamma(1), delta(1), epsilon(1). CF(0) has three main subunits: a(1), b(2) and c(9-12). The alpha and beta chains form an alternating ring which encloses part of the gamma chain. CF(1) is attached to CF(0) by a central stalk formed by the gamma and epsilon chains, while a peripheral stalk is formed by the delta and b chains.

The protein localises to the cell inner membrane. It catalyses the reaction ATP + H2O + 4 H(+)(in) = ADP + phosphate + 5 H(+)(out). Produces ATP from ADP in the presence of a proton gradient across the membrane. The catalytic sites are hosted primarily by the beta subunits. In Paraburkholderia xenovorans (strain LB400), this protein is ATP synthase subunit beta 2.